Here is a 157-residue protein sequence, read N- to C-terminus: Transmembrane protein 42 (157 aa).

Helical transmembrane passes span phenylalanine 37–alanine 57, isoleucine 67–phenylalanine 87, isoleucine 100–leucine 120, and cysteine 124–histidine 144.

It is found in the membrane. This Mus musculus (Mouse) protein is Transmembrane protein 42 (Tmem42).